The primary structure comprises 689 residues: MRKFFRGASFYILAFIIILFIVQNFGRPTQEIDELDFSEFYRALVNDRVTEAHLVERSVEGIWVNNNNEEMSYRSFVPEVFSEERLTLIIEEKIDQEGLRVSAAPPPTTPWFIELLPSIFMVLIFIVFWFVFMQQSQGGGNRVMSFGKSKAKLHKDDEGKRITFDDVAGLDEEKAEVEELVDFLKNPKKYIELGARIPKGILMIGPPGTGKTYLTKAVAGEAGVPFFSISGSDFVEMFVGVGASRVRDLFEQAKKSAPCIIFIDEIDAVGRKRGAGLGGGHDEREQTLNQLLVEMDGFGINEGIIIVAATNRPDILDPALLRPGRFDRQVMVGAPDIKGREQILQVHAKGKPLDEDVNLKVLARRTPGFTPADIENLMNEAALLTARKNEKKIKMETVEEAITKVIAGLEKKSRVISEKERKLTAYHEAGHAVVAKLLTHTDPVHQVTIIPRGRAGGFTMTLPTEDKYYVTKTEMQEHIVHLLGGRVAEKLVLHDISTGASNDLQRVSSIARAMVTQYGMSDKLGSMTFGDGDSEVFLGRDFTSKHNYSEEVAAEIDQEIRKFVEEAYMLTEKLLTENMDKLHVIAQALLKLETLDADAFEMIFTGEIVIGKDDQLEDIQPKLNVVKAKKRAAEAAEEAEVAKEDAKKQDVKVSLKKQEKEELIEVSSDKEEEKDNQDDQDNEENRKEE.

The Cytoplasmic segment spans residues 1-3 (MRK). Residues 4–24 (FFRGASFYILAFIIILFIVQN) traverse the membrane as a helical segment. At 25-111 (FGRPTQEIDE…SAAPPPTTPW (87 aa)) the chain is on the extracellular side. A helical membrane pass occupies residues 112 to 132 (FIELLPSIFMVLIFIVFWFVF). Topologically, residues 133-689 (MQQSQGGGNR…QDNEENRKEE (557 aa)) are cytoplasmic. Residue 205-212 (GPPGTGKT) coordinates ATP. His-427 contributes to the Zn(2+) binding site. Glu-428 is a catalytic residue. Zn(2+) contacts are provided by His-431 and Asp-503. Positions 661-673 (EELIEVSSDKEEE) are enriched in basic and acidic residues. A disordered region spans residues 661–689 (EELIEVSSDKEEEKDNQDDQDNEENRKEE).

In the central section; belongs to the AAA ATPase family. The protein in the C-terminal section; belongs to the peptidase M41 family. As to quaternary structure, homohexamer. Zn(2+) serves as cofactor.

The protein localises to the cell membrane. Acts as a processive, ATP-dependent zinc metallopeptidase for both cytoplasmic and membrane proteins. Plays a role in the quality control of integral membrane proteins. The polypeptide is ATP-dependent zinc metalloprotease FtsH 2 (Alkaliphilus metalliredigens (strain QYMF)).